The following is a 156-amino-acid chain: Probable chemoreceptor glutamine deamidase CheD (156 aa).

It belongs to the CheD family.

It catalyses the reaction L-glutaminyl-[protein] + H2O = L-glutamyl-[protein] + NH4(+). Probably deamidates glutamine residues to glutamate on methyl-accepting chemotaxis receptors (MCPs), playing an important role in chemotaxis. The protein is Probable chemoreceptor glutamine deamidase CheD of Sulfurimonas denitrificans (strain ATCC 33889 / DSM 1251) (Thiomicrospira denitrificans (strain ATCC 33889 / DSM 1251)).